Reading from the N-terminus, the 241-residue chain is uncharacterized protein (241 aa).

The protein belongs to the AB hydrolase superfamily. AB hydrolase 2 family.

This is an uncharacterized protein from Schizosaccharomyces pombe (strain 972 / ATCC 24843) (Fission yeast).